Consider the following 78-residue polypeptide: Large ribosomal subunit protein bL28 (78 aa).

It belongs to the bacterial ribosomal protein bL28 family.

The protein is Large ribosomal subunit protein bL28 of Psychrobacter sp. (strain PRwf-1).